Reading from the N-terminus, the 360-residue chain is Peptide chain release factor 1 (360 aa).

The residue at position 235 (Gln-235) is an N5-methylglutamine. Basic and acidic residues predominate over residues 291-308 (ASERRNLLGTGDRSDRNR). Residues 291 to 312 (ASERRNLLGTGDRSDRNRTYNF) form a disordered region.

It belongs to the prokaryotic/mitochondrial release factor family. Methylated by PrmC. Methylation increases the termination efficiency of RF1.

The protein resides in the cytoplasm. Functionally, peptide chain release factor 1 directs the termination of translation in response to the peptide chain termination codons UAG and UAA. This is Peptide chain release factor 1 from Yersinia pseudotuberculosis serotype I (strain IP32953).